Consider the following 333-residue polypeptide: Phosphate acetyltransferase (333 aa).

Belongs to the phosphate acetyltransferase and butyryltransferase family.

It localises to the cytoplasm. It catalyses the reaction acetyl-CoA + phosphate = acetyl phosphate + CoA. It functions in the pathway metabolic intermediate biosynthesis; acetyl-CoA biosynthesis; acetyl-CoA from acetate: step 2/2. This Clostridium acetobutylicum (strain ATCC 824 / DSM 792 / JCM 1419 / IAM 19013 / LMG 5710 / NBRC 13948 / NRRL B-527 / VKM B-1787 / 2291 / W) protein is Phosphate acetyltransferase (pta).